The primary structure comprises 33 residues: Cytochrome b6-f complex subunit 8 (33 aa).

A helical membrane pass occupies residues 2–22 (LFTIAWASLAAVFSFSIAMVV).

The protein belongs to the PetN family. As to quaternary structure, the 4 large subunits of the cytochrome b6-f complex are cytochrome b6, subunit IV (17 kDa polypeptide, PetD), cytochrome f and the Rieske protein, while the 4 small subunits are PetG, PetL, PetM and PetN. The complex functions as a dimer.

The protein localises to the cellular thylakoid membrane. Component of the cytochrome b6-f complex, which mediates electron transfer between photosystem II (PSII) and photosystem I (PSI), cyclic electron flow around PSI, and state transitions. This Synechococcus sp. (strain CC9311) protein is Cytochrome b6-f complex subunit 8.